A 194-amino-acid chain; its full sequence is E3 ubiquitin-protein ligase RNF185 (194 aa).

Over residues 1–27 (MASAAASESSSSSSSSSAGAANGQSAG) the composition is skewed to low complexity. Positions 1 to 32 (MASAAASESSSSSSSSSAGAANGQSAGESGGG) are disordered. Residues 31–82 (GGGAQDSTFECNICLDTSKDAVISLCGHLFCWPCLHQWLETRPNRQVCPVCK) form a required for ubiquitin ligase activity and protection against ER stress-induced cell death region. An RING-type zinc finger spans residues 41 to 82 (CNICLDTSKDAVISLCGHLFCWPCLHQWLETRPNRQVCPVCK). The segment at 92 to 126 (PLYGRGSTGQQDPREKTPPRPQGQRPEPENRGGFQ) is disordered. Transmembrane regions (helical) follow at residues 133-153 (GGFQ…ATAF) and 174-194 (QFLS…LLIA).

It is found in the mitochondrion outer membrane. The protein resides in the endoplasmic reticulum membrane. It catalyses the reaction S-ubiquitinyl-[E2 ubiquitin-conjugating enzyme]-L-cysteine + [acceptor protein]-L-lysine = [E2 ubiquitin-conjugating enzyme]-L-cysteine + N(6)-ubiquitinyl-[acceptor protein]-L-lysine.. It participates in protein modification; protein ubiquitination. Its function is as follows. E3 ubiquitin-protein ligase that regulates selective mitochondrial autophagy by mediating 'Lys-63'-linked polyubiquitination. Acts in the endoplasmic reticulum (ER)-associated degradation (ERAD) pathway, which targets misfolded proteins that accumulate in the endoplasmic reticulum (ER) for ubiquitination and subsequent proteasome-mediated degradation. Protects cells from ER stress-induced apoptosis. Responsible for the cotranslational ubiquitination and degradation of CFTR in the ERAD pathway. Also acts as a regulator of the innate antiviral response by catalyzing 'Lys-27'-linked polyubiquitination of CGAS, thereby promoting CGAS cyclic GMP-AMP synthase activity. Preferentially associates with the E2 enzymes UBE2J1 and UBE2J2. This chain is E3 ubiquitin-protein ligase RNF185 (rnf185), found in Danio rerio (Zebrafish).